The sequence spans 884 residues: MASLRDIRATFLDYFAKHEHEVVPSAPLVPQDDPTLLFVNAGMVPFKNSFTGQEKRASLRATSSQKCVRAGGKHNDLDNVGYTARHHTFFEMLGNFSFGDYFKEEAISHAWNLVTGEFGLPAEKLLVTVYAEDEQARALWRKIAGLTDDRIIGISTSDNFWSMGDTGPCGPCSEIFFDHGPSIAGGPPGSPDEDGDRFIEIWNLVFMQYEQLGPDERINLPKPSIDTGMGLERISAILQGKHNNYETDLFRNLIAAGESVLGVKAEGDALASHRVIADHLRSTCFLMADGVTPSNEGRGYVLRRIMRRAMRHAHLLGAGEPVMWKLVDALKSEMGDAYPELERAQALLEETLQVEEERFQRTLGRGLSLLEEATADMGEGDALAGATAFKLYDTYGFPLDLTQDALRAKGMTVDEAGFNSAMDKQRADARASKFSSGDAAPDAVWFAVRDKVGATAFTGYAGTGGKGRLTAIVSGGQEAKALGSGQRAELVFDETPFYGESGGQCGDTGEIRFVDGAVFTVEDTQKRGGDMHAHIGVLTKGEITLGDVAALDADAPRRAAIRANHSATHLAHAALRDVLGAHVTQKGSHVGPDRLRFDFSHNKSVSADQIAAIEAQVNAVIRQNVPVSTREMTPDAAIEAGALALFGEKYGDTVRVLAMGQGLADHATPYSVELCGGTHVERTGDIALFKIIAETAVSSGIRRIEAMTGEGARLYMDEQIGFGRAAADALKTPPSDLATRVAALVDERRKLERQLAEAKKQLAMGGGASGAPAGPETINGVNFIGRVVEGVGGKDLRGLIDEAKAQMGSGVAAFIGVNDGKAALAVGVTDDLKDRFVAVDLVKAGAAAVGGKGGGGRPDFAQAGGPDGAKANDGLAAIRAALAG.

Zn(2+) contacts are provided by His565, His569, Cys675, and His679.

This sequence belongs to the class-II aminoacyl-tRNA synthetase family. Zn(2+) is required as a cofactor.

The protein resides in the cytoplasm. It catalyses the reaction tRNA(Ala) + L-alanine + ATP = L-alanyl-tRNA(Ala) + AMP + diphosphate. Its function is as follows. Catalyzes the attachment of alanine to tRNA(Ala) in a two-step reaction: alanine is first activated by ATP to form Ala-AMP and then transferred to the acceptor end of tRNA(Ala). Also edits incorrectly charged Ser-tRNA(Ala) and Gly-tRNA(Ala) via its editing domain. This is Alanine--tRNA ligase from Maricaulis maris (strain MCS10) (Caulobacter maris).